A 261-amino-acid polypeptide reads, in one-letter code: Imidazole glycerol phosphate synthase subunit HisF (261 aa).

Catalysis depends on residues D11 and D130.

Belongs to the HisA/HisF family. Heterodimer of HisH and HisF.

Its subcellular location is the cytoplasm. It carries out the reaction 5-[(5-phospho-1-deoxy-D-ribulos-1-ylimino)methylamino]-1-(5-phospho-beta-D-ribosyl)imidazole-4-carboxamide + L-glutamine = D-erythro-1-(imidazol-4-yl)glycerol 3-phosphate + 5-amino-1-(5-phospho-beta-D-ribosyl)imidazole-4-carboxamide + L-glutamate + H(+). It functions in the pathway amino-acid biosynthesis; L-histidine biosynthesis; L-histidine from 5-phospho-alpha-D-ribose 1-diphosphate: step 5/9. In terms of biological role, IGPS catalyzes the conversion of PRFAR and glutamine to IGP, AICAR and glutamate. The HisF subunit catalyzes the cyclization activity that produces IGP and AICAR from PRFAR using the ammonia provided by the HisH subunit. The sequence is that of Imidazole glycerol phosphate synthase subunit HisF from Heliobacterium modesticaldum (strain ATCC 51547 / Ice1).